The primary structure comprises 293 residues: 4-hydroxybenzoate octaprenyltransferase (293 aa).

The next 7 helical transmembrane spans lie at 25–45, 48–68, 101–121, 142–162, 165–185, 223–243, and 271–291; these read IGNFLLLWPMLWGLWIAAKGL, LKVLVVFVLGVLIMRAAGCVI, LFVVLCLVAFGLVLLMNPLTI, HFPQVHLGAAFGWAIPMAFAA, GAVAPVAWLLFLSAVLWATIY, VMLAVLVAAGLVVGLGAFWYL, and FLNNNWLGGLIFLGLLLDLHL.

Belongs to the UbiA prenyltransferase family. Mg(2+) is required as a cofactor.

It is found in the cell inner membrane. The enzyme catalyses all-trans-octaprenyl diphosphate + 4-hydroxybenzoate = 4-hydroxy-3-(all-trans-octaprenyl)benzoate + diphosphate. It participates in cofactor biosynthesis; ubiquinone biosynthesis. Its function is as follows. Catalyzes the prenylation of para-hydroxybenzoate (PHB) with an all-trans polyprenyl group. Mediates the second step in the final reaction sequence of ubiquinone-8 (UQ-8) biosynthesis, which is the condensation of the polyisoprenoid side chain with PHB, generating the first membrane-bound Q intermediate 3-octaprenyl-4-hydroxybenzoate. This chain is 4-hydroxybenzoate octaprenyltransferase, found in Alkalilimnicola ehrlichii (strain ATCC BAA-1101 / DSM 17681 / MLHE-1).